Consider the following 162-residue polypeptide: COP9 signalosome complex subunit 9 (162 aa).

The PCI domain maps to 6-118; sequence ETIKSLEDPY…SVSKSMKFSR (113 aa).

In terms of assembly, component of a COP9 signalosome-like (CSN) complex, composed of at least RRI1/CSN5, CSN9, RRI2/CSN10, PCI8/CSN11, CSN12 and CSI1. In the complex, it probably interacts directly with CSN12 and CSI1. Also interacts with RPN5.

It is found in the cytoplasm. It localises to the nucleus. Component of the COP9 signalosome (CSN) complex that acts as a regulator of the ubiquitin (Ubl) conjugation pathway by mediating the deneddylation of the cullin subunit of SCF-type E3 ubiquitin-protein ligase complexes. The CSN complex is involved in the regulation of the mating pheromone response. This Saccharomyces cerevisiae (strain ATCC 204508 / S288c) (Baker's yeast) protein is COP9 signalosome complex subunit 9 (CSN9).